Reading from the N-terminus, the 124-residue chain is Modulator protein MzrA (124 aa).

Residues 1 to 7 (MINRRMK) are Cytoplasmic-facing. A helical transmembrane segment spans residues 8 to 28 (TGFVFHLLLLLLPLVVLVTSS). At 29-124 (RRTADDVTLH…KLSQQPFKLG (96 aa)) the chain is on the periplasmic side.

Belongs to the MzrA family. As to quaternary structure, interacts with EnvZ.

It localises to the cell inner membrane. Functionally, modulates the activity of the EnvZ/OmpR two-component regulatory system, probably by directly modulating EnvZ enzymatic activity and increasing stability of phosphorylated OmpR. This Musicola paradisiaca (strain Ech703) (Dickeya paradisiaca) protein is Modulator protein MzrA.